The following is a 333-amino-acid chain: Glycerol-3-phosphate dehydrogenase [NAD(P)+] (333 aa).

The NADPH site is built by phenylalanine 19, arginine 40, arginine 41, and lysine 113. Positions 113 and 141 each coordinate sn-glycerol 3-phosphate. Residue alanine 145 participates in NADPH binding. The sn-glycerol 3-phosphate site is built by lysine 196, aspartate 249, serine 259, arginine 260, and asparagine 261. Residue lysine 196 is the Proton acceptor of the active site. Arginine 260 provides a ligand contact to NADPH. NADPH-binding residues include valine 282 and glutamate 283.

The protein belongs to the NAD-dependent glycerol-3-phosphate dehydrogenase family.

It localises to the cytoplasm. The catalysed reaction is sn-glycerol 3-phosphate + NAD(+) = dihydroxyacetone phosphate + NADH + H(+). It carries out the reaction sn-glycerol 3-phosphate + NADP(+) = dihydroxyacetone phosphate + NADPH + H(+). Its pathway is membrane lipid metabolism; glycerophospholipid metabolism. Functionally, catalyzes the reduction of the glycolytic intermediate dihydroxyacetone phosphate (DHAP) to sn-glycerol 3-phosphate (G3P), the key precursor for phospholipid synthesis. The sequence is that of Glycerol-3-phosphate dehydrogenase [NAD(P)+] from Sinorhizobium fredii (strain NBRC 101917 / NGR234).